Reading from the N-terminus, the 402-residue chain is Major outer membrane porin (402 aa).

Positions 1-22 are cleaved as a signal peptide; it reads MKKLLKSALLFAATGSALSLQA.

This sequence belongs to the chlamydial porin (CP) (TC 1.B.2) family. As to quaternary structure, part of a disulfide cross-linked outer membrane complex (COMC) composed of the major outer membrane porin, the small cysteine-rich protein (OmcA) and the large cysteine-rich periplasmic protein (OmcB).

The protein resides in the cell outer membrane. Its function is as follows. In elementary bodies (EBs, the infectious stage, which is able to survive outside the host cell) provides the structural integrity of the outer envelope through disulfide cross-links with the small cysteine-rich protein and the large cysteine-rich periplasmic protein. It has been described in publications as the Sarkosyl-insoluble COMC (Chlamydia outer membrane complex), and serves as the functional equivalent of peptidoglycan. Permits diffusion of specific solutes through the outer membrane. In Chlamydia psittaci (Chlamydophila psittaci), this protein is Major outer membrane porin (ompA).